The following is an 859-amino-acid chain: Photoactivated adenylate cyclase subunit beta-like protein ST- (859 aa).

In terms of domain architecture, BLUF 1 spans 56 to 149 (LRRLMYLSKS…GRMYGDWHMK (94 aa)). Positions 420–444 (RPPIFDDTPKSNPRPRTPGYGGRQR) are disordered. The BLUF 2 domain maps to 471-563 (LTTLTYISQA…RVYTSEWTLT (93 aa)). Residues 814–859 (ARSGEQPLTEPEQAKPDFRVSPGRDRHGVSGRRSNSSQGKGSIQVG) are disordered. Residues 825–841 (EQAKPDFRVSPGRDRHG) show a composition bias toward basic and acidic residues. Polar residues predominate over residues 845 to 859 (RRSNSSQGKGSIQVG).

As to quaternary structure, heterotetramer of two alpha and two beta subunits.

It localises to the cell projection. The protein localises to the cilium. It is found in the flagellum. The chain is Photoactivated adenylate cyclase subunit beta-like protein ST- from Euglena gracilis.